A 325-amino-acid polypeptide reads, in one-letter code: D site-binding protein (325 aa).

Disordered stretches follow at residues 1 to 98 (MARP…AGPS), 124 to 203 (LEHG…EVLM), and 230 to 256 (FSEEELKPQPIMKKARKVQVPEEQKDE). Residues 17-28 (GPAGAPPGGGAL) show a composition bias toward gly residues. Residues 71-80 (AGPADAPSGA) are compositionally biased toward low complexity. S86 is subject to Phosphoserine. The span at 88-98 (RGRSGPVAGPS) shows a compositional bias: low complexity. A compositionally biased stretch (pro residues) spans 129 to 153 (PPSPPPPGGLSPAPSPARTPAPSPG). A compositionally biased stretch (low complexity) spans 154–171 (PGSCSSSSPRSSPGHAPA). Residues 255–318 (DEKYWSRRYK…SHYRAVLSRY (64 aa)) form the bZIP domain. The segment at 257-279 (KYWSRRYKNNEAAKRSRDARRLK) is basic motif. The interval 283-297 (ISVRAAFLEKENALL) is leucine-zipper.

The protein belongs to the bZIP family. PAR subfamily. In terms of assembly, binds DNA as a homodimer or a heterodimer. Can form a heterodimer with TEF. As to expression, expressed in the suprachiasmatic nuclei (SCN) and in most peripheral tissues, with a strong circadian rhythmicity.

It is found in the nucleus. Its function is as follows. This transcriptional activator recognizes and binds to the sequence 5'-RTTAYGTAAY-3' found in the promoter of genes such as albumin, CYP2A4 and CYP2A5. It is not essential for circadian rhythm generation, but modulates important clock output genes. May be a direct target for regulation by the circadian pacemaker component clock. May affect circadian period and sleep regulation. The polypeptide is D site-binding protein (Dbp) (Mus musculus (Mouse)).